The following is a 329-amino-acid chain: NAD(+) hydrolase TcpA (329 aa).

Positions 5–134 (VSISYLALEQ…ADCVRFYTVR (130 aa)) constitute an MPN domain. A TIR domain is found at 192–324 (FEYDVFICHA…YVVNEILRVL (133 aa)). NAD(+) is bound by residues 201-202 (AH) and Ser231. The active site involves Glu267.

It catalyses the reaction NAD(+) + H2O = ADP-D-ribose + nicotinamide + H(+). Its function is as follows. NAD(+) hydrolase (NADase) that catalyzes cleavage of NAD(+) into ADP-D-ribose (ADPR) and nicotinamide. The chain is NAD(+) hydrolase TcpA from Theionarchaea archaeon (strain DG-70-1).